The following is a 477-amino-acid chain: uncharacterized protein (477 aa).

The chain crosses the membrane as a helical span at residues 107–129 (VNFWSLSMACASVLALLGLVYLI).

The protein resides in the membrane. This is an uncharacterized protein from Treponema pallidum (strain Nichols).